The following is a 449-amino-acid chain: Clusterin (449 aa).

An N-terminal signal peptide occupies residues 1-22 (MMKTLLLFVGLLLTWESGQVLG). A Nuclear localization signal motif is present at residues 78-81 (KKKK). The N-linked (GlcNAc...) (complex) asparagine glycan is linked to asparagine 86. 5 disulfide bridges follow: cysteine 102–cysteine 313, cysteine 113–cysteine 305, cysteine 116–cysteine 302, cysteine 121–cysteine 295, and cysteine 129–cysteine 285. N-linked (GlcNAc...) asparagine glycosylation occurs at asparagine 103. Serine 133 carries the phosphoserine modification. Residues asparagine 145, asparagine 291, and asparagine 354 are each glycosylated (N-linked (GlcNAc...) asparagine). A glycan (N-linked (GlcNAc...) (complex) asparagine) is linked at asparagine 374. Residue serine 396 is modified to Phosphoserine. Residues 443-447 (RKKHR) carry the Nuclear localization signal motif.

This sequence belongs to the clusterin family. Antiparallel disulfide-linked heterodimer of an alpha chain and a beta chain. Self-associates and forms higher oligomers. Interacts with a broad range of misfolded proteins, including APP, APOC2 and LYZ. Slightly acidic pH promotes interaction with misfolded proteins. Forms high-molecular weight oligomers upon interaction with misfolded proteins. Interacts with APOA1, LRP2, CLUAP1 and PON1. Interacts with the complement membrane attack complex. Interacts (via alpha chain) with XRCC6. Interacts with SYVN1, COMMD1, BTRC, CUL1 and with ubiquitin and SCF (SKP1-CUL1-F-box protein) E3 ubiquitin-protein ligase complexes. Interacts (via alpha chain) with BAX in stressed cells, where BAX undergoes a conformation change leading to association with the mitochondrial membrane. Does not interact with BAX in unstressed cells. Found in a complex with LTF, CLU, EPPIN and SEMG1. Interacts (immaturely glycosylated pre-secreted form) with HSPA5; this interaction promotes CLU stability and facilitates stress-induced CLU retrotranslocation from the secretory pathway to the mitochondria, thereby reducing stress-induced apoptosis by stabilizing mitochondrial membrane integrity. Interacts (isoform 4) with BCL2L1; this interaction releases and activates BAX and promotes cell death. Interacts with TGFBR2 and ACVR1. Interacts (secreted form) with STMN3; this interaction may act as an important modulator during neuronal differentiation. Interacts with VLDLR and LRP8. In terms of processing, proteolytically cleaved on its way through the secretory system, probably within the Golgi lumen. Proteolytic cleavage is not necessary for its chaperone activity. All non-secreted forms are not proteolytically cleaved. Chaperone activity of uncleaved forms is dependent on a non-reducing environment. Polyubiquitinated, leading to proteasomal degradation. Under cellular stress, the intracellular level of cleaved form is reduced due to proteasomal degradation. Post-translationally, extensively glycosylated with sulfated N-linked carbohydrates. About 30% of the protein mass is comprised of complex N-linked carbohydrate. Endoplasmic reticulum (ER) stress induces changes in glycosylation status and increases level of hypoglycosylated forms. Core carbohydrates are essential for chaperone activity. Non-secreted forms are hypoglycosylated or unglycosylated. As to expression, detected in blood plasma, cerebrospinal fluid, milk, seminal plasma and colon mucosa. Detected in the germinal center of colon lymphoid nodules and in colon parasympathetic ganglia of the Auerbach plexus (at protein level). Ubiquitous. Detected in brain, testis, ovary, liver and pancreas, and at lower levels in kidney, heart, spleen and lung.

The protein resides in the secreted. The protein localises to the cytoplasm. It localises to the nucleus. Its subcellular location is the mitochondrion membrane. It is found in the cytosol. The protein resides in the microsome. The protein localises to the endoplasmic reticulum. It localises to the mitochondrion. Its subcellular location is the perinuclear region. It is found in the cytoplasmic vesicle. The protein resides in the secretory vesicle. The protein localises to the chromaffin granule. Its function is as follows. Functions as extracellular chaperone that prevents aggregation of non native proteins. Prevents stress-induced aggregation of blood plasma proteins. Inhibits formation of amyloid fibrils by APP, APOC2, B2M, CALCA, CSN3, SNCA and aggregation-prone LYZ variants (in vitro). Does not require ATP. Maintains partially unfolded proteins in a state appropriate for subsequent refolding by other chaperones, such as HSPA8/HSC70. Does not refold proteins by itself. Binding to cell surface receptors triggers internalization of the chaperone-client complex and subsequent lysosomal or proteasomal degradation. Protects cells against apoptosis and against cytolysis by complement: inhibits assembly of the complement membrane attack complex (MAC) by preventing polymerization of C9 pore component of the MAC complex. Intracellular forms interact with ubiquitin and SCF (SKP1-CUL1-F-box protein) E3 ubiquitin-protein ligase complexes and promote the ubiquitination and subsequent proteasomal degradation of target proteins. Promotes proteasomal degradation of COMMD1 and IKBKB. Modulates NF-kappa-B transcriptional activity. A mitochondrial form suppresses BAX-dependent release of cytochrome c into the cytoplasm and inhibit apoptosis. Plays a role in the regulation of cell proliferation. An intracellular form suppresses stress-induced apoptosis by stabilizing mitochondrial membrane integrity through interaction with HSPA5. Secreted form does not affect caspase or BAX-mediated intrinsic apoptosis and TNF-induced NF-kappa-B-activity. Secreted form act as an important modulator during neuronal differentiation through interaction with STMN3. Plays a role in the clearance of immune complexes that arise during cell injury. Functionally, does not affect caspase or BAX-mediated intrinsic apoptosis and TNF-induced NF-kappa-B-activity. Does not affect caspase or BAX-mediated intrinsic apoptosis and TNF-induced NF-kappa-B-activity. Promotes cell death through interaction with BCL2L1 that releases and activates BAX. This Homo sapiens (Human) protein is Clusterin.